A 356-amino-acid chain; its full sequence is GTPase Obg (356 aa).

In terms of domain architecture, Obg spans 1–159; the sequence is MKFIDRVKIH…RWLRLELKLL (159 aa). Positions 160–331 constitute an OBG-type G domain; it reads ADVGLLGMPN…LVAEVARELE (172 aa). GTP contacts are provided by residues 166-173, 191-195, 213-216, 283-286, and 312-314; these read GMPNAGKS, FTTLV, DIPG, SKID, and SAV. Residues Ser-173 and Thr-193 each contribute to the Mg(2+) site.

This sequence belongs to the TRAFAC class OBG-HflX-like GTPase superfamily. OBG GTPase family. As to quaternary structure, monomer. Mg(2+) is required as a cofactor.

Its subcellular location is the cytoplasm. Its function is as follows. An essential GTPase which binds GTP, GDP and possibly (p)ppGpp with moderate affinity, with high nucleotide exchange rates and a fairly low GTP hydrolysis rate. Plays a role in control of the cell cycle, stress response, ribosome biogenesis and in those bacteria that undergo differentiation, in morphogenesis control. In Syntrophotalea carbinolica (strain DSM 2380 / NBRC 103641 / GraBd1) (Pelobacter carbinolicus), this protein is GTPase Obg.